The primary structure comprises 348 residues: tRNA N6-adenosine threonylcarbamoyltransferase (348 aa).

Positions 114 and 118 each coordinate Fe cation. Residues 137–141, Asp-171, Gly-184, Asp-188, and Asn-283 each bind substrate; that span reads LVSGG. Residue Asp-311 coordinates Fe cation.

Belongs to the KAE1 / TsaD family. Fe(2+) serves as cofactor.

The protein localises to the cytoplasm. The enzyme catalyses L-threonylcarbamoyladenylate + adenosine(37) in tRNA = N(6)-L-threonylcarbamoyladenosine(37) in tRNA + AMP + H(+). In terms of biological role, required for the formation of a threonylcarbamoyl group on adenosine at position 37 (t(6)A37) in tRNAs that read codons beginning with adenine. Is involved in the transfer of the threonylcarbamoyl moiety of threonylcarbamoyl-AMP (TC-AMP) to the N6 group of A37, together with TsaE and TsaB. TsaD likely plays a direct catalytic role in this reaction. This Nocardioides sp. (strain ATCC BAA-499 / JS614) protein is tRNA N6-adenosine threonylcarbamoyltransferase.